Consider the following 910-residue polypeptide: Protein translocase subunit SecA (910 aa).

ATP contacts are provided by residues Q89, 107–111, and D496; that span reads GEGKT. The disordered stretch occupies residues 873–910; the sequence is QEFSGGNLNRSQSNGSSVTVTTSSGGGTERKTSRRRKR. Positions 876 to 886 are enriched in polar residues; it reads SGGNLNRSQSN.

This sequence belongs to the SecA family. In terms of assembly, monomer and homodimer. Part of the essential Sec protein translocation apparatus which comprises SecA, SecYEG and auxiliary proteins SecDF. Other proteins may also be involved.

Its subcellular location is the cell inner membrane. It localises to the cytoplasm. It carries out the reaction ATP + H2O + cellular proteinSide 1 = ADP + phosphate + cellular proteinSide 2.. Part of the Sec protein translocase complex. Interacts with the SecYEG preprotein conducting channel. Has a central role in coupling the hydrolysis of ATP to the transfer of proteins into and across the cell membrane, serving as an ATP-driven molecular motor driving the stepwise translocation of polypeptide chains across the membrane. This chain is Protein translocase subunit SecA, found in Leptospira interrogans serogroup Icterohaemorrhagiae serovar copenhageni (strain Fiocruz L1-130).